The sequence spans 277 residues: Large ribosomal subunit protein uL2m (277 aa).

Residues 225 to 263 (AMNPVDHPHGGGEGKTSGGRPSVTPWSWPTKGQPTRSKR) form a disordered region. The segment covering 248–259 (TPWSWPTKGQPT) has biased composition (polar residues).

This sequence belongs to the universal ribosomal protein uL2 family.

The protein localises to the mitochondrion. This is Large ribosomal subunit protein uL2m (RPL2) from Reclinomonas americana.